The primary structure comprises 462 residues: Toxin CqTX-A (462 aa).

The signal sequence occupies residues 1-19; it reads MANMLYFSLLALLFMTGIA. An N-linked (GlcNAc...) asparagine glycan is attached at Asn-174.

This sequence belongs to the jellyfish toxin family. Type I subfamily. In terms of processing, contains disulfide bonds. N-glycosylated.

It is found in the secreted. It localises to the nematocyst. The protein localises to the target cell membrane. Its function is as follows. Critical allergen and main toxic protein of C.quadrigatus venom. Has potent hemolytic activity. Is lethal to crayfish. Causes cutaneous inflammation in humans. May act as a pore-forming toxin, disrupting normal transmembrane ion concentration gradients in susceptible cells. In Chiropsoides quadrigatus (Box jellyfish), this protein is Toxin CqTX-A.